Here is a 433-residue protein sequence, read N- to C-terminus: 4-hydroxy-3-methylbut-2-en-1-yl diphosphate synthase (flavodoxin) (433 aa).

Over residues Met1–Pro10 the composition is skewed to polar residues. Residues Met1 to Arg24 form a disordered region. Residues Cys320, Cys323, Cys366, and Glu373 each coordinate [4Fe-4S] cluster.

This sequence belongs to the IspG family. Requires [4Fe-4S] cluster as cofactor.

The enzyme catalyses (2E)-4-hydroxy-3-methylbut-2-enyl diphosphate + oxidized [flavodoxin] + H2O + 2 H(+) = 2-C-methyl-D-erythritol 2,4-cyclic diphosphate + reduced [flavodoxin]. It functions in the pathway isoprenoid biosynthesis; isopentenyl diphosphate biosynthesis via DXP pathway; isopentenyl diphosphate from 1-deoxy-D-xylulose 5-phosphate: step 5/6. Its function is as follows. Converts 2C-methyl-D-erythritol 2,4-cyclodiphosphate (ME-2,4cPP) into 1-hydroxy-2-methyl-2-(E)-butenyl 4-diphosphate. This Bordetella bronchiseptica (strain ATCC BAA-588 / NCTC 13252 / RB50) (Alcaligenes bronchisepticus) protein is 4-hydroxy-3-methylbut-2-en-1-yl diphosphate synthase (flavodoxin).